The following is a 112-amino-acid chain: UPF0145 protein RB3016 (112 aa).

The protein belongs to the UPF0145 family.

The chain is UPF0145 protein RB3016 from Rhodopirellula baltica (strain DSM 10527 / NCIMB 13988 / SH1).